The chain runs to 407 residues: Gonadotropin-releasing hormone receptor (407 aa).

The Extracellular segment spans residues 1 to 36 (MDYLNDSMFNNMTYNITSTPLPDAPRFDNVYVSKLC). 3 N-linked (GlcNAc...) asparagine glycosylation sites follow: Asn-5, Asn-11, and Asn-15. The helical transmembrane segment at 37-57 (VLGTVFVISFFGNTLVIIQIF) threads the bilayer. The Cytoplasmic segment spans residues 58–69 (RIRGSRSTIQSL). The helical transmembrane segment at 70–90 (ILNLAIADLMVSFFNILMDII) threads the bilayer. Topologically, residues 91 to 105 (WSATVEWLAGNTMCK) are extracellular. A disulfide bridge connects residues Cys-104 and Cys-183. Residues 106–126 (IMKYLTVFGLHLSTYITVSIA) traverse the membrane as a helical segment. The Cytoplasmic segment spans residues 127–147 (LDRCFAILSPMSRSKAPLRVR). The chain crosses the membrane as a helical span at residues 148-168 (IMITMAWVLSAIFSIPQAVIF). Residues 169-199 (QEQRKMFRQGMFHQCRDSYNALWQKQLYSAS) are Extracellular-facing. A helical transmembrane segment spans residues 200–220 (SLILLFVIPLIIMVTSYLLIL). The Cytoplasmic portion of the chain corresponds to 221–268 (KTIVKTSRQFHDTPISPTSMSCYSVNHGQIRTHLFERARKRSSRMSAV). Residues 269–289 (IVAAFILCWTPYYIIFLGFAF) traverse the membrane as a helical segment. Over 290–298 (FQWDNSRTV) the chain is Extracellular. Residues 299 to 319 (IYFFTLGTSNCMLNPLIYGAF) form a helical membrane-spanning segment. Residues 320–407 (TIYKVHRGRS…NGKMPTKPPG (88 aa)) are Cytoplasmic-facing. Residues 377-407 (SLTNPHQPVRPSPGINSTTSPNGKMPTKPPG) form a disordered region.

Belongs to the G-protein coupled receptor 1 family. Widely expressed in peripheral nervous tissue, gonadal tissue and brain. In the brain, expression is high in the palliovisceral lobe and superior buccal lobe but low in the subvertical lobe, superior and inferior frontal lobe, posterior brachial lobe and pedal lobe. Expressed in stomach, rectum, aorta, heart, salivary gland, branchia, pancreas, radula retractor muscle, branchial vessel but not in white body, esophagus, liver and kidney.

It is found in the cell membrane. Its function is as follows. Receptor for gonadotropin releasing hormone (GnRH) that mediates the action of GnRH to stimulate the secretion of the gonadotropic hormones luteinizing hormone (LH) and follicle-stimulating hormone (FSH). This receptor mediates its action by association with G-proteins that activate a phosphatidylinositol-calcium second messenger system. Ligand interaction triggers steroidogenesis in spermatozoa and follicles. Appears to be involved in contraction of the radula retractor muscle. This chain is Gonadotropin-releasing hormone receptor, found in Octopus vulgaris (Common octopus).